The primary structure comprises 318 residues: Cell surface sensor SHO1 (318 aa).

Positions 1–23 are disordered; that stretch reads MPSYGSLHSPSLRKMEHSRGQYG. Residues 1 to 38 lie on the Cytoplasmic side of the membrane; it reads MPSYGSLHSPSLRKMEHSRGQYGGGRKGMSLGNVIGDP. The helical transmembrane segment at 39 to 59 threads the bilayer; it reads FALATISIAGLAWLIAFIASI. At 60–71 the chain is on the extracellular side; sequence VAQIQTTQGFPT. The chain crosses the membrane as a helical span at residues 72-92; that stretch reads YTWWTVVFYFFLIPGVFVVVA. The Cytoplasmic portion of the chain corresponds to 93-100; sequence SDTIQTYH. Residues 101–121 form a helical membrane-spanning segment; the sequence is VALVGYMACGLVLTTSSVNGL. Residues 122–130 lie on the Extracellular side of the membrane; the sequence is VYSTNGAKE. The chain crosses the membrane as a helical span at residues 131–151; it reads AAAAGFILLSMVTIVWIFYFG. Residues 152 to 318 lie on the Cytoplasmic side of the membrane; it reads SAPSAMPRAY…IAPSNYLILL (167 aa). The disordered stretch occupies residues 172-255; the sequence is TSNNRQTMTG…AGGAADAEIV (84 aa). The segment covering 190–214 has biased composition (polar residues); it reads ETSTSVQPPQMYTSAQLNGFENPSP. Residues 237 to 250 are compositionally biased toward low complexity; that stretch reads GLPKTTTPPAGGAA. Residues 259-318 form the SH3 domain; it reads EYPYRAKAIYTYEANPDDANEISFSKHEILEVSDVSGRWWQARKETGETGIAPSNYLILL.

Belongs to the SHO1 family. As to quaternary structure, forms homooligomers.

The protein resides in the cell membrane. Functionally, MSB2 and SHO1 have overlapping functions in recognizing various surface signals for MAPK PMK1 activation and appressorium formation. While MSB2 is critical for sensing surface hydrophobicity and cutin monomers, SHO1 may play a more important role in recognizing rice leaf waxes. This Pyricularia oryzae (strain 70-15 / ATCC MYA-4617 / FGSC 8958) (Rice blast fungus) protein is Cell surface sensor SHO1.